We begin with the raw amino-acid sequence, 25 residues long: MDSKAVLKGMLEKAYRIEAGFEKRG.

This is an uncharacterized protein from Archaeoglobus fulgidus (strain ATCC 49558 / DSM 4304 / JCM 9628 / NBRC 100126 / VC-16).